A 206-amino-acid polypeptide reads, in one-letter code: Ras-related protein Rab7 (206 aa).

GTP contacts are provided by residues 15 to 22, 63 to 67, and 125 to 128; these read GDSGVGKT, DTAGQ, and NKVD. S-geranylgeranyl cysteine attachment occurs at residues Cys205 and Cys206.

Belongs to the small GTPase superfamily. Rab family.

The protein localises to the cell membrane. Functionally, protein transport. Probably involved in vesicular traffic. This is Ras-related protein Rab7 from Cenchrus ciliaris (Buffelgrass).